The chain runs to 149 residues: D-aminoacyl-tRNA deacylase (149 aa).

The short motif at 137–138 (GP) is the Gly-cisPro motif, important for rejection of L-amino acids element.

This sequence belongs to the DTD family. Homodimer.

The protein resides in the cytoplasm. The enzyme catalyses glycyl-tRNA(Ala) + H2O = tRNA(Ala) + glycine + H(+). It carries out the reaction a D-aminoacyl-tRNA + H2O = a tRNA + a D-alpha-amino acid + H(+). Its function is as follows. An aminoacyl-tRNA editing enzyme that deacylates mischarged D-aminoacyl-tRNAs. Also deacylates mischarged glycyl-tRNA(Ala), protecting cells against glycine mischarging by AlaRS. Acts via tRNA-based rather than protein-based catalysis; rejects L-amino acids rather than detecting D-amino acids in the active site. By recycling D-aminoacyl-tRNA to D-amino acids and free tRNA molecules, this enzyme counteracts the toxicity associated with the formation of D-aminoacyl-tRNA entities in vivo and helps enforce protein L-homochirality. This Geobacter sp. (strain M21) protein is D-aminoacyl-tRNA deacylase.